The following is a 349-amino-acid chain: Insulin gene enhancer protein ISL-1 (349 aa).

LIM zinc-binding domains follow at residues 17 to 70 (CVGC…CKRD) and 79 to 133 (CAKC…RADH). Residues 181-240 (TTRVRTVLNEKQLHTLRTCYAANPRPDALMKEQLVEMTGLSPRVIRVWFQNKRCKDKKRS) constitute a DNA-binding region (homeobox). Positions 262 to 291 (GTPMVAASPERHDGGLQANPVEVQSYQPPW) are LIM-binding domain (LID). The interval 312-349 (VNFSEGGPGSNSTGSEVASMSSQLPDTPNSMVASPIEA) is disordered. The span at 321-343 (SNSTGSEVASMSSQLPDTPNSMV) shows a compositional bias: polar residues.

As to quaternary structure, at neuronal promoters, displaces LDB1 from LHX3 LIM domain to form a ternary complex in which ISL1 contacts both LHX3 and LDB1; allosteric structural changes in the DNA binding domain of LHX3, induced by the ISL1:LHX3 interaction, may explain differences in sequence specificity of the different complexes. Interacts with LHX3. Interacts (via C-terminus) with POU4F2 (via C-terminus) isoform 1. Interacts with POU3F2. Interacts with POU4F3. Interacts (via N-terminal domain) with MLIP; the interaction represses ISL1 transactivator activity. Interacts with GCN5/KAT2A. Interactions of ISL1 with MLIP1 or KAT2A may be mutually exclusive. In terms of processing, ubiquitinated probably by WWP1 E3 ubiquitin ligase; ubiquitination is followed by protein degradation. Phosphorylated. In terms of tissue distribution, expressed in subsets of neurons of the adrenal medulla and dorsal root ganglion, inner nuclear and ganglion cell layers in the retina, the pineal and some regions of the brain.

The protein localises to the nucleus. DNA-binding transcriptional activator. Recognizes and binds to the consensus octamer binding site 5'-ATAATTAA-3' in promoter of target genes. Plays a fundamental role in the gene regulatory network essential for retinal ganglion cell (RGC) differentiation. Cooperates with the transcription factor POU4F2 to achieve maximal levels of expression of RGC target genes and RGC fate specification in the developing retina. Involved in the specification of motor neurons in cooperation with LHX3 and LDB1. Binds to insulin gene enhancer sequences. Essential for heart development. Marker of one progenitor cell population that give rise to the outflow tract, right ventricle, a subset of left ventricular cells, and a large number of atrial cells as well, its function is required for these progenitors to contribute to the heart. Controls the expression of FGF and BMP growth factors in this cell population and is required for proliferation and survival of cells within pharyngeal foregut endoderm and adjacent splanchnic mesoderm as well as for migration of cardiac progenitors into the heart. This Homo sapiens (Human) protein is Insulin gene enhancer protein ISL-1 (ISL1).